The primary structure comprises 137 residues: ATP synthase epsilon chain, chloroplastic (137 aa).

The protein belongs to the ATPase epsilon chain family. In terms of assembly, F-type ATPases have 2 components, CF(1) - the catalytic core - and CF(0) - the membrane proton channel. CF(1) has five subunits: alpha(3), beta(3), gamma(1), delta(1), epsilon(1). CF(0) has three main subunits: a, b and c.

It localises to the plastid. The protein resides in the chloroplast thylakoid membrane. Its function is as follows. Produces ATP from ADP in the presence of a proton gradient across the membrane. The polypeptide is ATP synthase epsilon chain, chloroplastic (Oryza nivara (Indian wild rice)).